The sequence spans 295 residues: Small ribosomal subunit protein uS2 (295 aa).

S2 bears the N-acetylserine mark. A Phosphoserine modification is found at S43. K52 bears the N6-acetyllysine mark. The segment at 54-113 (TWEKLLLAARAIVAIENPADVSVISSRNTGQRAVLKFAAATGATPIAGRFTPGTFTNQIQ) is interaction with PPP1R16B. N6-acetyllysine; alternate is present on K89. K89 participates in a covalent cross-link: Glycyl lysine isopeptide (Lys-Gly) (interchain with G-Cter in SUMO2); alternate. T97 carries the phosphothreonine modification. 2 laminin-binding regions span residues 161–180 (IPCN…MLAR) and 205–229 (RDPE…EFQG). 5 [DE]-W-[ST] repeats span residues 230–232 (EWT), 247–249 (DWS), 266–268 (DWS), 275–277 (DWS), and 293–295 (EWS). Residues 242-295 (QPEVADWSEGVQVPSVPIQQFPTEDWSAQPSTEDWSAAPTAQATEWVGTTTEWS) form a laminin-binding region. The disordered stretch occupies residues 266 to 295 (DWSAQPSTEDWSAAPTAQATEWVGTTTEWS).

This sequence belongs to the universal ribosomal protein uS2 family. As to quaternary structure, monomer (37LRP) and homodimer (67LR). Component of the small ribosomal subunit. Mature ribosomes consist of a small (40S) and a large (60S) subunit. The 40S subunit contains about 33 different proteins and 1 molecule of RNA (18S). The 60S subunit contains about 49 different proteins and 3 molecules of RNA (28S, 5.8S and 5S). Interacts with RPS21. Interacts with several laminins including at least LAMB1. Interacts with MDK. The mature dimeric form interacts with PPP1R16B (via its fourth ankyrin repeat). Interacts with PPP1CA only in the presence of PPP1R16B. Acylated. Acylation may be a prerequisite for conversion of the monomeric 37 kDa laminin receptor precursor (37LRP) to the mature dimeric 67 kDa laminin receptor (67LR), and may provide a mechanism for membrane association. In terms of processing, cleaved by stromelysin-3 (ST3) at the cell surface. Cleavage by stromelysin-3 may be a mechanism to alter cell-extracellular matrix interactions.

The protein localises to the cell membrane. The protein resides in the cytoplasm. It localises to the nucleus. Required for the assembly and/or stability of the 40S ribosomal subunit. Required for the processing of the 20S rRNA-precursor to mature 18S rRNA in a late step of the maturation of 40S ribosomal subunits. Also functions as a cell surface receptor for laminin. Plays a role in cell adhesion to the basement membrane and in the consequent activation of signaling transduction pathways. May play a role in cell fate determination and tissue morphogenesis. Also acts as a receptor for several other ligands, including the pathogenic prion protein, viruses, and bacteria. Acts as a PPP1R16B-dependent substrate of PPP1CA. The protein is Small ribosomal subunit protein uS2 of Bos taurus (Bovine).